A 211-amino-acid chain; its full sequence is Protein-methionine-sulfoxide reductase heme-binding subunit MsrQ (211 aa).

The next 5 membrane-spanning stretches (helical) occupy residues 17-37, 82-102, 116-136, 153-173, and 178-198; these read LAGLLPFLWLVWAINHGGLGA, LWCFAWATLHLTSYALLELGV, PYLTLGIISWVILLALAFTST, FVYLVAILAPIHYLWSVKIIS, and IYAGLAVLLLALRYKKLLSLF.

Belongs to the MsrQ family. In terms of assembly, heterodimer of a catalytic subunit (MsrP) and a heme-binding subunit (MsrQ). The cofactor is FMN. Requires heme b as cofactor.

It localises to the cell inner membrane. Functionally, part of the MsrPQ system that repairs oxidized periplasmic proteins containing methionine sulfoxide residues (Met-O), using respiratory chain electrons. Thus protects these proteins from oxidative-stress damage caused by reactive species of oxygen and chlorine generated by the host defense mechanisms. MsrPQ is essential for the maintenance of envelope integrity under bleach stress, rescuing a wide series of structurally unrelated periplasmic proteins from methionine oxidation, including the primary periplasmic chaperone SurA and the lipoprotein Pal. MsrQ provides electrons for reduction to the reductase catalytic subunit MsrP, using the quinone pool of the respiratory chain. The sequence is that of Protein-methionine-sulfoxide reductase heme-binding subunit MsrQ from Shigella boydii serotype 4 (strain Sb227).